Consider the following 453-residue polypeptide: uncharacterized protein (453 aa).

Residues cysteine 74, cysteine 80, cysteine 83, and cysteine 162 each coordinate [4Fe-4S] cluster. Positions 286, 315, 336, and 384 each coordinate S-adenosyl-L-methionine. Cysteine 411 serves as the catalytic Nucleophile.

Belongs to the class I-like SAM-binding methyltransferase superfamily. RNA M5U methyltransferase family.

This is an uncharacterized protein from Staphylococcus aureus (strain COL).